A 736-amino-acid polypeptide reads, in one-letter code: RNA-binding protein RMD9-like, mitochondrial (736 aa).

3 disordered regions span residues 1 to 28, 124 to 148, and 566 to 618; these read MFRF…KTNS, PRRS…HPNT, and NRGI…GTPV. The N-terminal 79 residues, 1–79, are a transit peptide targeting the mitochondrion; that stretch reads MFRFAQPANV…HFKNQFSSRN (79 aa). Over residues 125–140 the composition is skewed to low complexity; the sequence is RRSNMRNNGNNNMNNG. A compositionally biased stretch (polar residues) spans 566–578; sequence NRGISSSSPMSAV. A compositionally biased stretch (low complexity) spans 579 to 596; that stretch reads NSLAPSTTNTPSPSLSPI. Residues 602–613 are compositionally biased toward polar residues; it reads LSSARNTPNKIW.

The protein belongs to the RMD9 family. As to quaternary structure, monomer. In terms of processing, phosphorylated. Phosphorylation promotes binding to RNA.

The protein resides in the mitochondrion inner membrane. May be involved in the processing or stability of mitochondrial mRNAs. This chain is RNA-binding protein RMD9-like, mitochondrial, found in Candida glabrata (strain ATCC 2001 / BCRC 20586 / JCM 3761 / NBRC 0622 / NRRL Y-65 / CBS 138) (Yeast).